The sequence spans 245 residues: Orotidine 5'-phosphate decarboxylase (245 aa).

Substrate contacts are provided by residues Asp-22, Lys-44, Asp-71–Thr-80, Thr-131, Arg-192, Gln-201, Gly-221, and Arg-222. The active-site Proton donor is Lys-73.

Belongs to the OMP decarboxylase family. Type 1 subfamily. As to quaternary structure, homodimer.

The enzyme catalyses orotidine 5'-phosphate + H(+) = UMP + CO2. It functions in the pathway pyrimidine metabolism; UMP biosynthesis via de novo pathway; UMP from orotate: step 2/2. Functionally, catalyzes the decarboxylation of orotidine 5'-monophosphate (OMP) to uridine 5'-monophosphate (UMP). This is Orotidine 5'-phosphate decarboxylase from Escherichia coli (strain K12 / MC4100 / BW2952).